Consider the following 180-residue polypeptide: Ribulose bisphosphate carboxylase small subunit, chloroplastic 4 (180 aa).

A chloroplast-targeting transit peptide spans 1 to 56; that stretch reads MASSIVSSAAVATRGNGAQASMVAPFTGLKSTASFPVSRKQNLDITSIASNGGRVS.

It belongs to the RuBisCO small chain family. As to quaternary structure, heterohexadecamer of 8 large and 8 small subunits. (Microbial infection) Binds to tobamovirus movement protein; this interaction seems required for viral systemic movement.

The protein localises to the plastid. It is found in the chloroplast. Its subcellular location is the cell junction. It localises to the plasmodesma. In terms of biological role, ruBisCO catalyzes two reactions: the carboxylation of D-ribulose 1,5-bisphosphate, the primary event in carbon dioxide fixation, as well as the oxidative fragmentation of the pentose substrate. Both reactions occur simultaneously and in competition at the same active site. Although the small subunit is not catalytic it is essential for maximal activity. Involved in antiviral defenses. The polypeptide is Ribulose bisphosphate carboxylase small subunit, chloroplastic 4 (Solanum lycopersicum (Tomato)).